The following is a 391-amino-acid chain: Formate-dependent phosphoribosylglycinamide formyltransferase (391 aa).

N(1)-(5-phospho-beta-D-ribosyl)glycinamide contacts are provided by residues Glu-20–Leu-21 and Glu-80. ATP-binding positions include Arg-112, Lys-153, Ser-158–Gln-163, Glu-193–Ile-196, and Glu-201. An ATP-grasp domain is found at Arg-117–Gln-306. Residues Glu-265 and Glu-277 each coordinate Mg(2+). N(1)-(5-phospho-beta-D-ribosyl)glycinamide-binding positions include Asp-284, Lys-354, and Arg-361–Arg-362.

The protein belongs to the PurK/PurT family. As to quaternary structure, homodimer.

The enzyme catalyses N(1)-(5-phospho-beta-D-ribosyl)glycinamide + formate + ATP = N(2)-formyl-N(1)-(5-phospho-beta-D-ribosyl)glycinamide + ADP + phosphate + H(+). It participates in purine metabolism; IMP biosynthesis via de novo pathway; N(2)-formyl-N(1)-(5-phospho-D-ribosyl)glycinamide from N(1)-(5-phospho-D-ribosyl)glycinamide (formate route): step 1/1. Involved in the de novo purine biosynthesis. Catalyzes the transfer of formate to 5-phospho-ribosyl-glycinamide (GAR), producing 5-phospho-ribosyl-N-formylglycinamide (FGAR). Formate is provided by PurU via hydrolysis of 10-formyl-tetrahydrofolate. The protein is Formate-dependent phosphoribosylglycinamide formyltransferase of Shewanella baltica (strain OS185).